A 299-amino-acid polypeptide reads, in one-letter code: tRNA dimethylallyltransferase (299 aa).

ATP is bound at residue 11–18 (GPTAVGKT). 13-18 (TAVGKT) contacts substrate. The interval 36 to 39 (DSQQ) is interaction with substrate tRNA.

This sequence belongs to the IPP transferase family. Monomer. Mg(2+) is required as a cofactor.

It carries out the reaction adenosine(37) in tRNA + dimethylallyl diphosphate = N(6)-dimethylallyladenosine(37) in tRNA + diphosphate. Functionally, catalyzes the transfer of a dimethylallyl group onto the adenine at position 37 in tRNAs that read codons beginning with uridine, leading to the formation of N6-(dimethylallyl)adenosine (i(6)A). In Streptococcus pyogenes serotype M49 (strain NZ131), this protein is tRNA dimethylallyltransferase.